Reading from the N-terminus, the 104-residue chain is Large ribosomal subunit protein uL24 (104 aa).

Belongs to the universal ribosomal protein uL24 family. As to quaternary structure, part of the 50S ribosomal subunit.

In terms of biological role, one of two assembly initiator proteins, it binds directly to the 5'-end of the 23S rRNA, where it nucleates assembly of the 50S subunit. Its function is as follows. One of the proteins that surrounds the polypeptide exit tunnel on the outside of the subunit. The chain is Large ribosomal subunit protein uL24 from Shewanella woodyi (strain ATCC 51908 / MS32).